An 879-amino-acid chain; its full sequence is Pentatricopeptide repeat-containing protein At1g71210, mitochondrial (879 aa).

A mitochondrion-targeting transit peptide spans 1 to 44 (MLRCWSVTVERSCEGMLLRRRILSLSASSFRNFTSGNNGDAIPF). 16 PPR repeats span residues 181-215 (SLRL…GLDL), 216-246 (DSFG…ISVR), 250-280 (CAVT…LLPN), 285-319 (CGSG…GTVN), 320-355 (MDRA…GCEL), 356-390 (EVFR…GVSP), 391-425 (NKKT…GFAP), 426-460 (TAMS…GHFL), 461-495 (GGKT…DLLP), 496-530 (KRIA…GVDT), 531-565 (SFKM…GYTP), 566-597 (TRSL…FQLS), 602-636 (KVQA…GITP), 637-667 (TVAS…LREQ), 671-705 (KKRL…GLQP), and 706-740 (SIEC…GRRI).

It belongs to the PPR family. P subfamily.

It is found in the mitochondrion. The polypeptide is Pentatricopeptide repeat-containing protein At1g71210, mitochondrial (Arabidopsis thaliana (Mouse-ear cress)).